The sequence spans 450 residues: Tubulin alpha chain (450 aa).

Residue Gln11 coordinates GTP. Lys40 bears the N6-acetyllysine mark. GTP-binding residues include Glu71, Ser140, Gly144, Thr145, Thr179, Asn206, and Asn228. Residue Glu71 participates in Mg(2+) binding. Residue Glu254 is part of the active site.

The protein belongs to the tubulin family. In terms of assembly, dimer of alpha and beta chains. A typical microtubule is a hollow water-filled tube with an outer diameter of 25 nm and an inner diameter of 15 nM. Alpha-beta heterodimers associate head-to-tail to form protofilaments running lengthwise along the microtubule wall with the beta-tubulin subunit facing the microtubule plus end conferring a structural polarity. Microtubules usually have 13 protofilaments but different protofilament numbers can be found in some organisms and specialized cells. It depends on Mg(2+) as a cofactor. Post-translationally, undergoes a tyrosination/detyrosination cycle, the cyclic removal and re-addition of a C-terminal tyrosine residue by the enzymes tubulin tyrosine carboxypeptidase (TTCP) and tubulin tyrosine ligase (TTL), respectively. Acetylation of alpha chains at Lys-40 stabilizes microtubules and affects affinity and processivity of microtubule motors. This modification has a role in multiple cellular functions, ranging from cell motility, cell cycle progression or cell differentiation to intracellular trafficking and signaling.

It localises to the cytoplasm. Its subcellular location is the cytoskeleton. It carries out the reaction GTP + H2O = GDP + phosphate + H(+). In terms of biological role, tubulin is the major constituent of microtubules, a cylinder consisting of laterally associated linear protofilaments composed of alpha- and beta-tubulin heterodimers. Microtubules grow by the addition of GTP-tubulin dimers to the microtubule end, where a stabilizing cap forms. Below the cap, tubulin dimers are in GDP-bound state, owing to GTPase activity of alpha-tubulin. The sequence is that of Tubulin alpha chain from Haemonchus contortus (Barber pole worm).